A 207-amino-acid chain; its full sequence is Putative 3-methyladenine DNA glycosylase (207 aa).

Belongs to the DNA glycosylase MPG family.

This Burkholderia lata (strain ATCC 17760 / DSM 23089 / LMG 22485 / NCIMB 9086 / R18194 / 383) protein is Putative 3-methyladenine DNA glycosylase.